The chain runs to 378 residues: Anhydro-N-acetylmuramic acid kinase (378 aa).

Position 23–30 (23–30 (GTSMDGAD)) interacts with ATP.

The protein belongs to the anhydro-N-acetylmuramic acid kinase family.

It catalyses the reaction 1,6-anhydro-N-acetyl-beta-muramate + ATP + H2O = N-acetyl-D-muramate 6-phosphate + ADP + H(+). It participates in amino-sugar metabolism; 1,6-anhydro-N-acetylmuramate degradation. Its pathway is cell wall biogenesis; peptidoglycan recycling. Catalyzes the specific phosphorylation of 1,6-anhydro-N-acetylmuramic acid (anhMurNAc) with the simultaneous cleavage of the 1,6-anhydro ring, generating MurNAc-6-P. Is required for the utilization of anhMurNAc either imported from the medium or derived from its own cell wall murein, and thus plays a role in cell wall recycling. This chain is Anhydro-N-acetylmuramic acid kinase, found in Bordetella bronchiseptica (strain ATCC BAA-588 / NCTC 13252 / RB50) (Alcaligenes bronchisepticus).